The following is a 373-amino-acid chain: MLKRKPSNVSEKEKHQKPKRSSSFGNFDRFRNNSLSKPDDSTEAHEGDPTNGSGEQSKTSNNGGGLGKKMRAISWTMKKKVGKKYIKALSEEKDEEDGENAHPYRNSDPVIGTHTEKVSLKASDSMDSLYSGQSSSSGITSCSDGTSNRDSFRLDDDGPYSGPFCGRARVHTDFTPSPYDTDSLKIKKGDIIDIICKTPMGMWTGMLNNKVGNFKFIYVDVISEEEAAPKKIKANRRSNSKKSKTLQEFLERIHLQEYTSTLLLNGYETLEDLKDIKESHLIELNIENPDDRRRLLSAAENFLEEEIIQEQENEPEPLSLSSDISLNKSQLDDCPRDSGCYISSGNSDNGKEDLESENLSDMVHKIIITEPSD.

The segment at 1-72 (MLKRKPSNVS…GGGLGKKMRA (72 aa)) is disordered. The short motif at 20-25 (RSSSFG) is the Important for interaction with 14-3-3 proteins element. Phosphoserine is present on residues serine 23 and serine 34. The segment covering 37–48 (KPDDSTEAHEGD) has biased composition (basic and acidic residues). The span at 50–61 (TNGSGEQSKTSN) shows a compositional bias: polar residues. Serine 74 carries the post-translational modification Phosphoserine. Residue threonine 76 is modified to Phosphothreonine. Residues serine 90 and serine 119 each carry the phosphoserine modification. A disordered region spans residues 91-153 (EEKDEEDGEN…DGTSNRDSFR (63 aa)). Residues 123–146 (SDSMDSLYSGQSSSSGITSCSDGT) are compositionally biased toward low complexity. Position 160 is a phosphotyrosine (tyrosine 160). The SH3 domain maps to 163–224 (PFCGRARVHT…KFIYVDVISE (62 aa)). The region spanning 241–305 (KKSKTLQEFL…LSAAENFLEE (65 aa)) is the SAM domain. The disordered stretch occupies residues 337–359 (DSGCYISSGNSDNGKEDLESENL).

In terms of assembly, interacts with FASLG. Interacts with phosphotyrosine containing proteins. Interacts (via SH3 domain) with CTTN. Interacts (phosphorylated at Ser-23) with YWHAB, YWHAE, YWHAG, YWHAH, YWHAZ and SFN. Interacts directly with SAP30 and HDAC1. Identified in a complex with SAP30 and HDAC1. In terms of tissue distribution, detected in peripheral blood B-cells (at protein level). Detected in spleen, liver and peripheral blood.

It localises to the nucleus. Its subcellular location is the cytoplasm. The protein localises to the cell projection. The protein resides in the ruffle. Negative regulator of B-cell activation. Down-regulates cell proliferation (in vitro). Promotes RAC1-dependent membrane ruffle formation and reorganization of the actin cytoskeleton. Regulates cell spreading and cell polarization. Stimulates HDAC1 activity. Regulates LYN activity by modulating its tyrosine phosphorylation. In Homo sapiens (Human), this protein is SAM domain-containing protein SAMSN-1 (SAMSN1).